The primary structure comprises 98 residues: Prolactin-releasing peptide (98 aa).

The signal sequence occupies residues 1–22 (MKAVGAWLLCLLLLGLALQGAA). Phenylalanine amide is present on Phe-53. A propeptide spanning residues 58–98 (AAPGDGPRPGPRRELACIPLEGGAEPSRALLGRLTAQLVQE) is cleaved from the precursor.

More abundantly expressed in the brainstem than the hypothalamus.

The protein resides in the secreted. Its function is as follows. Stimulates prolactin (PRL) release and regulates the expression of prolactin through its receptor GPR10. May stimulate lactotrophs directly to secrete PRL. The protein is Prolactin-releasing peptide (PRLH) of Ovis aries (Sheep).